The following is a 433-amino-acid chain: Delta-aminolevulinic acid dehydratase, chloroplastic (433 aa).

A chloroplast-targeting transit peptide spans 1-56 (MASTFNIPCNAGTIKNFNNSQRNLGFSSNLGINFAKTRFSNCGDSGRIPSQLVVRA). The tract at residues 83–115 (NAPSAPPVPPTPKAPSGTPSVSPLSLGRRPRRN) is disordered. The segment covering 86–95 (SAPPVPPTPK) has biased composition (pro residues). Residue Lys301 is the Schiff-base intermediate with substrate of the active site. 5-aminolevulinate is bound by residues Arg311 and Lys323. Glu339 contributes to the Mg(2+) binding site. Lys354 acts as the Schiff-base intermediate with substrate in catalysis. 5-aminolevulinate contacts are provided by Ser380 and Tyr419.

The protein belongs to the ALAD family. As to quaternary structure, homooctamer. Requires Mg(2+) as cofactor.

It localises to the plastid. The protein localises to the chloroplast. The enzyme catalyses 2 5-aminolevulinate = porphobilinogen + 2 H2O + H(+). It participates in porphyrin-containing compound metabolism; protoporphyrin-IX biosynthesis; coproporphyrinogen-III from 5-aminolevulinate: step 1/4. Catalyzes an early step in the biosynthesis of tetrapyrroles. Binds two molecules of 5-aminolevulinate per subunit, each at a distinct site, and catalyzes their condensation to form porphobilinogen. The sequence is that of Delta-aminolevulinic acid dehydratase, chloroplastic (HEMB) from Spinacia oleracea (Spinach).